We begin with the raw amino-acid sequence, 500 residues long: Probable cytosol aminopeptidase (500 aa).

Positions 265 and 270 each coordinate Mn(2+). Residue Lys277 is part of the active site. The Mn(2+) site is built by Asp288, Asp347, and Glu349. The active site involves Arg351.

The protein belongs to the peptidase M17 family. Mn(2+) serves as cofactor.

The protein localises to the cytoplasm. It catalyses the reaction Release of an N-terminal amino acid, Xaa-|-Yaa-, in which Xaa is preferably Leu, but may be other amino acids including Pro although not Arg or Lys, and Yaa may be Pro. Amino acid amides and methyl esters are also readily hydrolyzed, but rates on arylamides are exceedingly low.. It carries out the reaction Release of an N-terminal amino acid, preferentially leucine, but not glutamic or aspartic acids.. In terms of biological role, presumably involved in the processing and regular turnover of intracellular proteins. Catalyzes the removal of unsubstituted N-terminal amino acids from various peptides. This Corynebacterium diphtheriae (strain ATCC 700971 / NCTC 13129 / Biotype gravis) protein is Probable cytosol aminopeptidase.